Consider the following 80-residue polypeptide: Conotoxin SmIVB (80 aa).

An N-terminal signal peptide occupies residues 1–21 (MGMRMMFTVFLLVVLATTVVS). A propeptide spanning residues 22–38 (IPSDRASDGRNAEVNER) is cleaved from the precursor. P40 bears the 4-hydroxyproline mark. O-linked (HexNAc...) serine glycosylation is present at S45. 4-hydroxyproline is present on residues P55, P60, P61, P70, and P72. Position 75 is a serine amide (S75). The propeptide occupies 76-80 (GRRNH).

It belongs to the conotoxin A superfamily. Post-translationally, contains 3 disulfide bonds. Expressed by the venom duct.

It is found in the secreted. Neurotoxin with probable activity on sodium channel. Induces intense repetitive firing of the frog neuromuscular junction, leading to a tetanic contracture in muscle fiber (spastic paralysis). In vivo, shows the same effect as the whole venom when injected on fish prey. This is Conotoxin SmIVB from Conus stercusmuscarum (Fly-specked cone).